We begin with the raw amino-acid sequence, 351 residues long: MFCFLGLRLLKYITFRTAYATIFAFLLALIFGPFIISRLKKLKLDQILRKDGPKRHLSEKMGIPTMGGVLIFFCVLVSLFFWIHFFNIYFLIVLFVMVSFACLGFTDDLLKIKRKNSDGLNPKFKIYGQILFSFISVVMLYYFGGEHVSILYFPFFKSLKLDLGILYIPFGMFVLISASNSFNLTDGLDGLAIGLSIVVIGALIIIAYLTSRVDFALYLNIPNVKGCEELVIFLGALLGGSFGFLWFNAYPAKIMMGDTGSLSIGAVLGMVALILKSEILFAILAGVFVVETLSVIIQVVVYKKTKKRVFKMAPLHHHFEELGWSEMQVVIRFWIIGLIFAILALSTIKIR.

10 helical membrane-spanning segments follow: residues Thr17 to Ser37, Met61 to Ile83, Ile88 to Phe105, Ile130 to Ile150, Ser158 to Ala178, Gly190 to Thr210, Leu230 to Tyr250, Ile254 to Ile274, Ile279 to Val299, and Gln328 to Ile348.

This sequence belongs to the glycosyltransferase 4 family. MraY subfamily. The cofactor is Mg(2+).

Its subcellular location is the cell inner membrane. It catalyses the reaction UDP-N-acetyl-alpha-D-muramoyl-L-alanyl-gamma-D-glutamyl-meso-2,6-diaminopimeloyl-D-alanyl-D-alanine + di-trans,octa-cis-undecaprenyl phosphate = di-trans,octa-cis-undecaprenyl diphospho-N-acetyl-alpha-D-muramoyl-L-alanyl-D-glutamyl-meso-2,6-diaminopimeloyl-D-alanyl-D-alanine + UMP. It participates in cell wall biogenesis; peptidoglycan biosynthesis. Catalyzes the initial step of the lipid cycle reactions in the biosynthesis of the cell wall peptidoglycan: transfers peptidoglycan precursor phospho-MurNAc-pentapeptide from UDP-MurNAc-pentapeptide onto the lipid carrier undecaprenyl phosphate, yielding undecaprenyl-pyrophosphoryl-MurNAc-pentapeptide, known as lipid I. This is Phospho-N-acetylmuramoyl-pentapeptide-transferase from Borrelia duttonii (strain Ly).